A 419-amino-acid polypeptide reads, in one-letter code: UDP-N-acetylglucosamine 1-carboxyvinyltransferase (419 aa).

22–23 (KN) contributes to the phosphoenolpyruvate binding site. Arginine 93 is a binding site for UDP-N-acetyl-alpha-D-glucosamine. Residue cysteine 117 is the Proton donor of the active site. At cysteine 117 the chain carries 2-(S-cysteinyl)pyruvic acid O-phosphothioketal. UDP-N-acetyl-alpha-D-glucosamine contacts are provided by aspartate 307 and isoleucine 329.

The protein belongs to the EPSP synthase family. MurA subfamily.

Its subcellular location is the cytoplasm. It catalyses the reaction phosphoenolpyruvate + UDP-N-acetyl-alpha-D-glucosamine = UDP-N-acetyl-3-O-(1-carboxyvinyl)-alpha-D-glucosamine + phosphate. It participates in cell wall biogenesis; peptidoglycan biosynthesis. Functionally, cell wall formation. Adds enolpyruvyl to UDP-N-acetylglucosamine. In Shewanella sp. (strain MR-7), this protein is UDP-N-acetylglucosamine 1-carboxyvinyltransferase.